A 261-amino-acid polypeptide reads, in one-letter code: Carbonic anhydrase 1 (261 aa).

Position 2 is an N-acetylalanine (Ala2). The region spanning 4-261 is the Alpha-carbonic anhydrase domain; sequence PDWGYDDKNG…LKGRTVRASF (258 aa). The active-site Proton donor/acceptor is the His65. Residues His95, His97, and His120 each coordinate Zn(2+). Substrate is bound by residues Thr200 and 200–201; that span reads TH. The disordered stretch occupies residues 238–261; it reads NPVPIQRNNRPTQPLKGRTVRASF.

The protein belongs to the alpha-carbonic anhydrase family. It depends on Zn(2+) as a cofactor.

Its subcellular location is the cytoplasm. The enzyme catalyses hydrogencarbonate + H(+) = CO2 + H2O. It catalyses the reaction urea = cyanamide + H2O. Its activity is regulated as follows. Inhibited by acetazolamide. In terms of biological role, catalyzes the reversible hydration of carbon dioxide. Can hydrate cyanamide to urea. The protein is Carbonic anhydrase 1 (CA1) of Macaca mulatta (Rhesus macaque).